The chain runs to 465 residues: DEAD-box ATP-dependent RNA helicase 55 (465 aa).

The Q motif motif lies at 17–45 (FSELKPPLSEDIIEALDRSGFEVCTPVQA). The Helicase ATP-binding domain maps to 48-219 (IPFLCSHKDV…KAGLRNPYLK (172 aa)). 61–68 (AATGSGKT) is an ATP binding site. Positions 167–170 (DEAD) match the DEAD box motif. The 195-residue stretch at 228–422 (QLVHLLIENK…KDKLQQEKRG (195 aa)) folds into the Helicase C-terminal domain. A disordered region spans residues 413-465 (KDKLQQEKRGKRKKSSKEAVDDSNKASRKRKLTGRQRQTIQTAQDEEEMNLRL). A compositionally biased stretch (basic and acidic residues) spans 428 to 437 (SKEAVDDSNK). The span at 456–465 (QDEEEMNLRL) shows a compositional bias: acidic residues.

It belongs to the DEAD box helicase family. DDX55/SPB4 subfamily.

The enzyme catalyses ATP + H2O = ADP + phosphate + H(+). The chain is DEAD-box ATP-dependent RNA helicase 55 (RH55) from Arabidopsis thaliana (Mouse-ear cress).